Here is a 402-residue protein sequence, read N- to C-terminus: Serine/threonine transporter SstT (402 aa).

9 helical membrane-spanning segments follow: residues 19 to 39 (IGVV…AIGL), 43 to 63 (LFVG…VISA), 86 to 106 (TFAA…TLIL), 138 to 158 (AITE…GLAM), 179 to 199 (VVKW…FTSI), 212 to 232 (LLIL…NPII), 287 to 307 (IPLG…ILTL), 327 to 347 (VVAA…LLLI), and 354 to 374 (FGIS…VGVI).

It belongs to the dicarboxylate/amino acid:cation symporter (DAACS) (TC 2.A.23) family.

It localises to the cell membrane. The catalysed reaction is L-serine(in) + Na(+)(in) = L-serine(out) + Na(+)(out). The enzyme catalyses L-threonine(in) + Na(+)(in) = L-threonine(out) + Na(+)(out). Its function is as follows. Involved in the import of serine and threonine into the cell, with the concomitant import of sodium (symport system). The protein is Serine/threonine transporter SstT of Streptococcus agalactiae serotype Ia (strain ATCC 27591 / A909 / CDC SS700).